An 813-amino-acid polypeptide reads, in one-letter code: Cadherin-22 (813 aa).

Positions 1-33 are cleaved as a signal peptide; sequence MRPRPAGALRAGAALSPVLLLLLLLQLLGHLWA. Over 34-621 the chain is Extracellular; the sequence is ASTPAPSSLS…AFVMAASLSP (588 aa). 5 consecutive Cadherin domains span residues 61 to 165, 166 to 274, 275 to 391, 392 to 495, and 496 to 613; these read WVWN…EPRF, LHGP…PPRF, PQKM…PPEF, RPPS…NPPE, and LATP…TTAF. Asn159 is a glycosylation site (N-linked (GlcNAc...) asparagine). Residues Asn463 and Asn609 are each glycosylated (N-linked (GlcNAc...) asparagine). Residues 622 to 642 traverse the membrane as a helical segment; the sequence is GALIALLVCVLILVVLALLIL. Residues 643–813 lie on the Cytoplasmic side of the membrane; the sequence is TLRRHHKSHL…HRGDDEAPAS (171 aa). Residues 696–726 are disordered; that stretch reads GGDPGGGAASPPQAASSSERHSLPRGPSSPE.

As to expression, strongly expressed in the pituitary gland and the brain (in the inner granular and glomerular layers of the olfactory bulb, anterior olfactory nucleus, primary olfactory cortex, Purkinje cell layer of cerebellum, and pineal gland). Low expression in lung and heart. No expression in submandibular gland, thymus, liver, spleen, adrenal, and kidney.

It localises to the cell membrane. Its function is as follows. Cadherins are calcium-dependent cell adhesion proteins. They preferentially interact with themselves in a homophilic manner in connecting cells; cadherins may thus contribute to the sorting of heterogeneous cell types. PB-cadherins may have a role in the morphological organization of pituitary gland and brain tissues. The chain is Cadherin-22 (Cdh22) from Rattus norvegicus (Rat).